The following is a 391-amino-acid chain: 3-ketoacyl-CoA thiolase (391 aa).

Residue Cys95 is the Acyl-thioester intermediate of the active site. Catalysis depends on proton acceptor residues His347 and Cys377.

This sequence belongs to the thiolase-like superfamily. Thiolase family. In terms of assembly, heterotetramer of two alpha chains (FadB) and two beta chains (FadA).

The protein localises to the cytoplasm. It carries out the reaction an acyl-CoA + acetyl-CoA = a 3-oxoacyl-CoA + CoA. Its pathway is lipid metabolism; fatty acid beta-oxidation. Its function is as follows. Catalyzes the final step of fatty acid oxidation in which acetyl-CoA is released and the CoA ester of a fatty acid two carbons shorter is formed. In Pseudomonas putida (Arthrobacter siderocapsulatus), this protein is 3-ketoacyl-CoA thiolase.